The sequence spans 268 residues: Tropinone reductase homolog (268 aa).

Residue 21–45 coordinates NADP(+); it reads LVTGGTRGIGYAIVEELANFGAEVY. Ser154 provides a ligand contact to substrate. Tyr167 acts as the Proton acceptor in catalysis.

The protein belongs to the short-chain dehydrogenases/reductases (SDR) family.

In Datura stramonium (Jimsonweed), this protein is Tropinone reductase homolog.